A 512-amino-acid polypeptide reads, in one-letter code: Eukaryotic translation initiation factor 3 subunit L (512 aa).

The region spanning 291–477 is the PCI domain; that stretch reads DAFRLFESIL…GERQFTDSVD (187 aa).

The protein belongs to the eIF-3 subunit L family. As to quaternary structure, component of the eukaryotic translation initiation factor 3 (eIF-3) complex.

The protein resides in the cytoplasm. In terms of biological role, component of the eukaryotic translation initiation factor 3 (eIF-3) complex, which is involved in protein synthesis of a specialized repertoire of mRNAs and, together with other initiation factors, stimulates binding of mRNA and methionyl-tRNAi to the 40S ribosome. The eIF-3 complex specifically targets and initiates translation of a subset of mRNAs involved in cell proliferation. This is Eukaryotic translation initiation factor 3 subunit L from Monosiga brevicollis (Choanoflagellate).